We begin with the raw amino-acid sequence, 331 residues long: L-lactate dehydrogenase A chain (331 aa).

Residues 29–57 (GMVGMASAISILLKDLCDELAMVDVMEDK) and Arg-98 contribute to the NAD(+) site. Arg-105, Asn-137, and Arg-168 together coordinate substrate. Asn-137 is a binding site for NAD(+). The active-site Proton acceptor is His-192. Thr-247 provides a ligand contact to substrate.

It belongs to the LDH/MDH superfamily. LDH family. Homotetramer.

The protein resides in the cytoplasm. It catalyses the reaction (S)-lactate + NAD(+) = pyruvate + NADH + H(+). The protein operates within fermentation; pyruvate fermentation to lactate; (S)-lactate from pyruvate: step 1/1. Its function is as follows. Interconverts simultaneously and stereospecifically pyruvate and lactate with concomitant interconversion of NADH and NAD(+). This Notothenia angustata (Rockcod) protein is L-lactate dehydrogenase A chain (ldha).